A 365-amino-acid chain; its full sequence is tRNA/tmRNA (uracil-C(5))-methyltransferase (365 aa).

Residues Gln189, Tyr217, Asn222, Glu238, and Asp298 each coordinate S-adenosyl-L-methionine. Residue Cys323 is the Nucleophile of the active site. Glu357 functions as the Proton acceptor in the catalytic mechanism.

It belongs to the class I-like SAM-binding methyltransferase superfamily. RNA M5U methyltransferase family. TrmA subfamily.

It carries out the reaction uridine(54) in tRNA + S-adenosyl-L-methionine = 5-methyluridine(54) in tRNA + S-adenosyl-L-homocysteine + H(+). It catalyses the reaction uridine(341) in tmRNA + S-adenosyl-L-methionine = 5-methyluridine(341) in tmRNA + S-adenosyl-L-homocysteine + H(+). Functionally, dual-specificity methyltransferase that catalyzes the formation of 5-methyluridine at position 54 (m5U54) in all tRNAs, and that of position 341 (m5U341) in tmRNA (transfer-mRNA). This is tRNA/tmRNA (uracil-C(5))-methyltransferase from Shewanella amazonensis (strain ATCC BAA-1098 / SB2B).